The sequence spans 222 residues: Phosphatidylinositol phosphate synthase (222 aa).

31–34 (DIVT) contacts a CDP-1,2-diacyl-sn-glycerol. 2 consecutive transmembrane segments (helical) span residues 32–49 (IVTLAGTAAAVIGALTLF) and 55–74 (WWGAVVVSFFVLADMLDGAM). Asp68 and Asp71 together coordinate Mg(2+). Residues Gly72, Arg76, and Thr82 each coordinate a CDP-1,2-diacyl-sn-glycerol. The Mg(2+) site is built by Asp89 and Asp93. Catalysis depends on Asp93, which acts as the Proton acceptor. Transmembrane regions (helical) follow at residues 95-112 (LGDGAVFAGLTWWAAFGL), 118-136 (VVATLICLVTSQVISYIKA), 156-173 (LVIVLIGAGLSDLPFFPL), and 179-196 (VAMWVLAVASVVTLLQRV).

Belongs to the CDP-alcohol phosphatidyltransferase class-I family. Homodimer. It depends on Mg(2+) as a cofactor.

The protein resides in the cell membrane. It is found in the secreted. Its subcellular location is the cell wall. It catalyses the reaction a CDP-1,2-diacyl-sn-glycerol + 1D-myo-inositol 3-phosphate = a 1,2-diacyl-sn-glycero-3-phospho-(1D-myo-inositol-3-phosphate) + CMP + H(+). It carries out the reaction 1,2-di-(9Z-octadecenoyl)-sn-glycero-3-cytidine-5'-diphosphate + 1D-myo-inositol 3-phosphate = 1,2-di-(9Z-octadecenoyl)-sn-glycero-3-phospho-(1D-myo-inositol-3-phosphate) + CMP + H(+). The catalysed reaction is 1,2-dihexadecanoyl-sn-glycero-3-CDP + 1D-myo-inositol 3-phosphate = 1,2-dihexadecanoyl-sn-glycero-3-phospho-(1D-myo-inositol-3-phosphate) + CMP + H(+). Its pathway is phospholipid metabolism; phosphatidylinositol phosphate biosynthesis. With respect to regulation, competitively inhibited by several inositol 1-phosphate analogs, including the phosphonate analog 1-deoxy-1-phosphonomethyl-myo-inositol (Ino-C-P). This leads to inhibition of M.smegmatis growth. Functionally, catalyzes the conjugation of the 1'-hydroxyl group of D-myo-inositol-3-phosphate (also named L-myo-inositol-1-phosphate) with a lipid tail of cytidine diphosphate diacylglycerol (CDP-DAG), forming phosphatidylinositol phosphate (PIP) and CMP. PIP is a precursor of phosphatidylinositol (PI) which is an essential lipid for mycobacteria required for formation of their cell wall. Is essential to the survival of M.smegmatis. The chain is Phosphatidylinositol phosphate synthase from Mycolicibacterium smegmatis (strain ATCC 700084 / mc(2)155) (Mycobacterium smegmatis).